The sequence spans 57 residues: Small ribosomal subunit protein bS21 (57 aa).

It belongs to the bacterial ribosomal protein bS21 family.

The chain is Small ribosomal subunit protein bS21 from Bacillus pumilus (strain SAFR-032).